A 948-amino-acid chain; its full sequence is Valine--tRNA ligase (948 aa).

Positions 40-50 (PNVTGSLHMGH) match the 'HIGH' region motif. Positions 551 to 555 (KMSKS) match the 'KMSKS' region motif. K554 contributes to the ATP binding site. The stretch at 879–945 (LIDKGAELAR…GKLAEQHARI (67 aa)) forms a coiled coil.

This sequence belongs to the class-I aminoacyl-tRNA synthetase family. ValS type 1 subfamily. In terms of assembly, monomer.

The protein resides in the cytoplasm. The catalysed reaction is tRNA(Val) + L-valine + ATP = L-valyl-tRNA(Val) + AMP + diphosphate. Catalyzes the attachment of valine to tRNA(Val). As ValRS can inadvertently accommodate and process structurally similar amino acids such as threonine, to avoid such errors, it has a 'posttransfer' editing activity that hydrolyzes mischarged Thr-tRNA(Val) in a tRNA-dependent manner. The sequence is that of Valine--tRNA ligase from Pseudomonas syringae pv. syringae (strain B728a).